Consider the following 105-residue polypeptide: Protamine-2 (105 aa).

The disordered stretch occupies residues 1 to 74 (MVRYRMRSPS…RRSCRRRRRH (74 aa)). A phosphoserine mark is found at serine 8, serine 10, and serine 33. Positions 33–42 (SPERVEDYGR) are enriched in basic and acidic residues. Positions 43–74 (THRGHHRHRRCSRKRLHRIHKRRRSCRRRRRH) are enriched in basic residues.

It belongs to the protamine P2 family. As to quaternary structure, interacts with TDRP. Proteolytic processing into mature chains is required for histone eviction during spermatogenesis. Transition proteins (TNP1 and TNP2) are required for processing. Testis.

The protein localises to the nucleus. It is found in the chromosome. Functionally, protamines substitute for histones in the chromatin of sperm during the haploid phase of spermatogenesis. They compact sperm DNA into a highly condensed, stable and inactive complex. The polypeptide is Protamine-2 (Prm2) (Rattus fuscipes (Bush rat)).